Reading from the N-terminus, the 235-residue chain is Sugar fermentation stimulation protein homolog (235 aa).

It belongs to the SfsA family.

This is Sugar fermentation stimulation protein homolog from Pseudomonas aeruginosa (strain LESB58).